Consider the following 101-residue polypeptide: Protein Tat (101 aa).

Over residues 1–12 the composition is skewed to basic and acidic residues; that stretch reads MEPVDPRLEPWK. Residues 1–20 are disordered; that stretch reads MEPVDPRLEPWKHPGSQPKT. The segment at 1–24 is interaction with human CREBBP; that stretch reads MEPVDPRLEPWKHPGSQPKTACTT. Positions 1–48 are transactivation; that stretch reads MEPVDPRLEPWKHPGSQPKTACTTCYCKKCCFHCQVCFTKKALGISYG. Residues Cys-22, Cys-25, and Cys-27 each coordinate Zn(2+). Residues 22–37 are cysteine-rich; the sequence is CTTCYCKKCCFHCQVC. Lys-28 is subject to N6-acetyllysine; by host PCAF. Zn(2+) contacts are provided by Cys-30, His-33, Cys-34, and Cys-37. Residues 38 to 48 form a core region; sequence FTKKALGISYG. The interval 47–101 is disordered; it reads YGRKKRRQRRRAPEDSQTHQVSLPKQPAPQFRGDPTGPKESKKKVERETETHPVD. Positions 49-57 match the Nuclear localization signal, RNA-binding (TAR), and protein transduction motif; sequence RKKRRQRRR. The segment at 49–86 is interaction with the host capping enzyme RNGTT; that stretch reads RKKRRQRRRAPEDSQTHQVSLPKQPAPQFRGDPTGPKE. N6-acetyllysine; by host EP300 and GCN5L2 occurs at positions 50 and 51. An asymmetric dimethylarginine; by host PRMT6 mark is found at Arg-52 and Arg-53. Residue Lys-71 forms a Glycyl lysine isopeptide (Lys-Gly) (interchain with G-Cter in ubiquitin) linkage. A Cell attachment site motif is present at residues 78–80; the sequence is RGD. A compositionally biased stretch (basic and acidic residues) spans 83–101; sequence GPKESKKKVERETETHPVD.

Belongs to the lentiviruses Tat family. Interacts with host CCNT1. Associates with the P-TEFb complex composed at least of Tat, P-TEFb (CDK9 and CCNT1), TAR RNA, RNA Pol II. Recruits the HATs CREBBP, TAF1/TFIID, EP300, PCAF and GCN5L2. Interacts with host KAT5/Tip60; this interaction targets the latter to degradation. Interacts with the host deacetylase SIRT1. Interacts with host capping enzyme RNGTT; this interaction stimulates RNGTT. Binds to host KDR, and to the host integrins ITGAV/ITGB3 and ITGA5/ITGB1. Interacts with host KPNB1/importin beta-1 without previous binding to KPNA1/importin alpha-1. Interacts with EIF2AK2. Interacts with host nucleosome assembly protein NAP1L1; this interaction may be required for the transport of Tat within the nucleus, since the two proteins interact at the nuclear rim. Interacts with host C1QBP/SF2P32; this interaction involves lysine-acetylated Tat. Interacts with the host chemokine receptors CCR2, CCR3 and CXCR4. Interacts with host DPP4/CD26; this interaction may trigger an anti-proliferative effect. Interacts with host LDLR. Interacts with the host extracellular matrix metalloproteinase MMP1. Interacts with host PRMT6; this interaction mediates Tat's methylation. Interacts with, and is ubiquitinated by MDM2/Hdm2. Interacts with host PSMC3 and HTATIP2. Interacts with STAB1; this interaction may overcome SATB1-mediated repression of IL2 and IL2RA (interleukin) in T cells by binding to the same domain than HDAC1. Interacts (when acetylated) with human CDK13, thereby increasing HIV-1 mRNA splicing and promoting the production of the doubly spliced HIV-1 protein Nef. Interacts with host TBP; this interaction modulates the activity of transcriptional pre-initiation complex. Interacts with host RELA. Interacts with host PLSCR1; this interaction negatively regulates Tat transactivation activity by altering its subcellular distribution. Asymmetrical arginine methylation by host PRMT6 seems to diminish the transactivation capacity of Tat and affects the interaction with host CCNT1. Post-translationally, acetylation by EP300, CREBBP, GCN5L2/GCN5 and PCAF regulates the transactivation activity of Tat. EP300-mediated acetylation of Lys-50 promotes dissociation of Tat from the TAR RNA through the competitive binding to PCAF's bromodomain. In addition, the non-acetylated Tat's N-terminus can also interact with PCAF. PCAF-mediated acetylation of Lys-28 enhances Tat's binding to CCNT1. Lys-50 is deacetylated by SIRT1. In terms of processing, polyubiquitination by host MDM2 does not target Tat to degradation, but activates its transactivation function and fosters interaction with CCNT1 and TAR RNA. Phosphorylated by EIF2AK2 on serine and threonine residues adjacent to the basic region important for TAR RNA binding and function. Phosphorylation of Tat by EIF2AK2 is dependent on the prior activation of EIF2AK2 by dsRNA.

Its subcellular location is the host nucleus. It is found in the host nucleolus. The protein resides in the host cytoplasm. The protein localises to the secreted. In terms of biological role, transcriptional activator that increases RNA Pol II processivity, thereby increasing the level of full-length viral transcripts. Recognizes a hairpin structure at the 5'-LTR of the nascent viral mRNAs referred to as the transactivation responsive RNA element (TAR) and recruits the cyclin T1-CDK9 complex (P-TEFb complex) that will in turn hyperphosphorylate the RNA polymerase II to allow efficient elongation. The CDK9 component of P-TEFb and other Tat-activated kinases hyperphosphorylate the C-terminus of RNA Pol II that becomes stabilized and much more processive. Other factors such as HTATSF1/Tat-SF1, SUPT5H/SPT5, and HTATIP2 are also important for Tat's function. Besides its effect on RNA Pol II processivity, Tat induces chromatin remodeling of proviral genes by recruiting the histone acetyltransferases (HATs) CREBBP, EP300 and PCAF to the chromatin. This also contributes to the increase in proviral transcription rate, especially when the provirus integrates in transcriptionally silent region of the host genome. To ensure maximal activation of the LTR, Tat mediates nuclear translocation of NF-kappa-B by interacting with host RELA. Through its interaction with host TBP, Tat may also modulate transcription initiation. Tat can reactivate a latently infected cell by penetrating in it and transactivating its LTR promoter. In the cytoplasm, Tat is thought to act as a translational activator of HIV-1 mRNAs. Extracellular circulating Tat can be endocytosed by surrounding uninfected cells via the binding to several surface receptors such as CD26, CXCR4, heparan sulfate proteoglycans (HSPG) or LDLR. Neurons are rarely infected, but they internalize Tat via their LDLR. Through its interaction with nuclear HATs, Tat is potentially able to control the acetylation-dependent cellular gene expression. Modulates the expression of many cellular genes involved in cell survival, proliferation or in coding for cytokines or cytokine receptors. Tat plays a role in T-cell and neurons apoptosis. Tat induced neurotoxicity and apoptosis probably contribute to neuroAIDS. Circulating Tat also acts as a chemokine-like and/or growth factor-like molecule that binds to specific receptors on the surface of the cells, affecting many cellular pathways. In the vascular system, Tat binds to ITGAV/ITGB3 and ITGA5/ITGB1 integrins dimers at the surface of endothelial cells and competes with bFGF for heparin-binding sites, leading to an excess of soluble bFGF. This is Protein Tat from Human immunodeficiency virus type 1 group M subtype B (isolate MN) (HIV-1).